We begin with the raw amino-acid sequence, 453 residues long: Transcription factor bHLH110 (453 aa).

Disordered regions lie at residues 1–37 (MDSANLHQLQDQLQLVGSSSSSSSLDNNSDPSCYGAS) and 177–197 (SSLPSSSSSSSPSSQSHRGNF). Low complexity-rich tracts occupy residues 8 to 32 (QLQDQLQLVGSSSSSSSLDNNSDPS) and 177 to 192 (SSLPSSSSSSSPSSQS). A bHLH domain is found at 322-371 (VESRSSCPPFKVRKEKLGDRIAALQQLVSPFGKTDTASVLMEAIGYIKFL). Positions 386–411 (SRNRPGKASQLVSQSQEGDEEETRDL) are disordered.

In terms of assembly, homodimer.

It is found in the nucleus. This Arabidopsis thaliana (Mouse-ear cress) protein is Transcription factor bHLH110 (BHLH110).